Here is a 120-residue protein sequence, read N- to C-terminus: Large ribosomal subunit protein bL20 (120 aa).

Belongs to the bacterial ribosomal protein bL20 family.

Functionally, binds directly to 23S ribosomal RNA and is necessary for the in vitro assembly process of the 50S ribosomal subunit. It is not involved in the protein synthesizing functions of that subunit. This Blochmanniella pennsylvanica (strain BPEN) protein is Large ribosomal subunit protein bL20.